A 168-amino-acid polypeptide reads, in one-letter code: Cofilin-1-B (168 aa).

Alanine 2 bears the N-acetylalanine mark. Residues glycine 4 to leucine 153 enclose the ADF-H domain. The short motif at lysine 30–lysine 34 is the Nuclear localization signal element.

Belongs to the actin-binding proteins ADF family. Post-translationally, inactive when phosphorylated. Phosphorylation levels vary during development. Oocytes contain only the phosphorylated form, and 80-95% of cfl1 protein is phosphorylated in unfertilized eggs. Rapid dephosphorylation occurs within 30 minutes after fertilization. Phosphorylation levels increase again between the morula and blastula stages (5-8 hpf) and then decrease again as gastrulation approaches. Dephosphorylated by pdxp. Expressed diffusely in both animal and vegetal hemispheres of the oocyte. During cleavage, expression accumulates around the cleavage furrow, along the vegetal membrane, and later in the midbody. Strongly expressed in the animal hemisphere during blastula stages, with most cells showing expression by gastrulation. By stage 17, expression is highest in cells of the developing neuroectoderm, and at stage 24 the notochord, neural tube, neural crest, somites and some cells of the archenteron show high expression. By stage 35, expression has declined in the notochord, but remains in the neural tube, epidermis and a layer of cells in the archenteron. Also highly expressed in the retina and neuronal cell bodies at the base of the cement gland but not the cement gland itself. At stage 38, expression is widespread, being highest in the nervous system and retina. In the adult, expression is high in the brain, heart, oocyte, stomach, and low in skeletal muscle.

Its subcellular location is the nucleus matrix. The protein localises to the cytoplasm. It is found in the cytoskeleton. The protein resides in the cell cortex. It localises to the membrane. Its function is as follows. May play a role in the regulation of cell morphology and cytoskeletal organization. Binds to F-actin and exhibits pH-sensitive F-actin depolymerizing activity. Required for formation of the cleavage furrow during cytokinesis. This Xenopus laevis (African clawed frog) protein is Cofilin-1-B (cfl1-b).